The sequence spans 206 residues: GTP cyclohydrolase 1 (206 aa).

Positions 98, 101, and 169 each coordinate Zn(2+).

It belongs to the GTP cyclohydrolase I family. As to quaternary structure, toroid-shaped homodecamer, composed of two pentamers of five dimers.

The catalysed reaction is GTP + H2O = 7,8-dihydroneopterin 3'-triphosphate + formate + H(+). It functions in the pathway cofactor biosynthesis; 7,8-dihydroneopterin triphosphate biosynthesis; 7,8-dihydroneopterin triphosphate from GTP: step 1/1. This is GTP cyclohydrolase 1 from Helicobacter hepaticus (strain ATCC 51449 / 3B1).